The sequence spans 436 residues: Tol-Pal system protein TolB (436 aa).

An N-terminal signal peptide occupies residues 1 to 28; it reads MRSFLKPLLTIAAMALGMTAVIPMPAWA.

It belongs to the TolB family. The Tol-Pal system is composed of five core proteins: the inner membrane proteins TolA, TolQ and TolR, the periplasmic protein TolB and the outer membrane protein Pal. They form a network linking the inner and outer membranes and the peptidoglycan layer.

The protein localises to the periplasm. Its function is as follows. Part of the Tol-Pal system, which plays a role in outer membrane invagination during cell division and is important for maintaining outer membrane integrity. In Mesorhizobium japonicum (strain LMG 29417 / CECT 9101 / MAFF 303099) (Mesorhizobium loti (strain MAFF 303099)), this protein is Tol-Pal system protein TolB.